We begin with the raw amino-acid sequence, 316 residues long: Methionyl-tRNA formyltransferase (316 aa).

113–116 (SLLP) is a (6S)-5,6,7,8-tetrahydrofolate binding site.

Belongs to the Fmt family.

The enzyme catalyses L-methionyl-tRNA(fMet) + (6R)-10-formyltetrahydrofolate = N-formyl-L-methionyl-tRNA(fMet) + (6S)-5,6,7,8-tetrahydrofolate + H(+). In terms of biological role, attaches a formyl group to the free amino group of methionyl-tRNA(fMet). The formyl group appears to play a dual role in the initiator identity of N-formylmethionyl-tRNA by promoting its recognition by IF2 and preventing the misappropriation of this tRNA by the elongation apparatus. The polypeptide is Methionyl-tRNA formyltransferase (Sodalis glossinidius (strain morsitans)).